Reading from the N-terminus, the 258-residue chain is Small ribosomal subunit protein mS40 (258 aa).

Residues 1 to 35 constitute a mitochondrion transit peptide; the sequence is MAASVLNTLLRRLPMLSLFRGAHRVQVPLQTLCTK. A phosphoserine mark is found at serine 38 and serine 49. The interval 218–258 is disordered; that stretch reads RLYQGHLREESGPPPESMPKMPPTAPAEASFTGQTDPQSAL. Positions 229–242 are enriched in pro residues; that stretch reads GPPPESMPKMPPTA. Residues 248–258 show a composition bias toward polar residues; sequence FTGQTDPQSAL.

Belongs to the bacterial ribosomal protein bS18 family. Mitochondrion-specific ribosomal protein mS40 subfamily. Component of the mitochondrial ribosome small subunit (28S) which comprises a 12S rRNA and about 30 distinct proteins.

The protein resides in the mitochondrion. This Macaca mulatta (Rhesus macaque) protein is Small ribosomal subunit protein mS40 (MRPS18B).